The following is a 225-amino-acid chain: Sugar fermentation stimulation protein homolog (225 aa).

This sequence belongs to the SfsA family.

The protein is Sugar fermentation stimulation protein homolog of Sulfolobus acidocaldarius (strain ATCC 33909 / DSM 639 / JCM 8929 / NBRC 15157 / NCIMB 11770).